A 1819-amino-acid chain; its full sequence is Gamma-tubulin complex component 6 (1819 aa).

3 disordered regions span residues Ser-810–Pro-889, Leu-929–Tyr-951, and Arg-1000–Glu-1023. Repeat copies occupy residues Gly-1027–His-1053, Gly-1054–His-1080, Gly-1081–His-1107, Gly-1108–His-1134, Gly-1135–His-1161, Gly-1162–His-1188, Gly-1189–His-1215, Gly-1216–His-1242, and Gly-1243–His-1269. Residues Gly-1027–His-1269 are 9 X 27 AA tandem repeats. The interval Pro-1271–Gln-1412 is disordered. Over residues Pro-1297–Val-1314 the composition is skewed to polar residues. Over residues Leu-1321–Gly-1335 the composition is skewed to low complexity. The segment covering Trp-1384–Pro-1398 has biased composition (polar residues).

Belongs to the TUBGCP family. In terms of assembly, component of the gamma-tubulin ring complex (gTuRC) consisting of TUBGCP2, TUBGCP3, TUBGCP4, TUBGCP5 and TUBGCP6 and gamma-tubulin TUBG1 or TUBG2. TUBGCP2, TUBGCP3, TUBGCP4, TUBGCP5 and TUBGCP6 assemble in a 5:5:2:1:1 stoichiometry; each is associated with a gamma-tubulin, thereby arranging 14 gamma-tubulins in a helical manner. Gamma-tubulin at the first position is blocked by TUBGCP3 at the last position, allowing 13 protafilaments to grow into a microtubule. The gTuRC (via TUBGCP3 and TUBGCP6) interacts with ACTB and MZT1; the interactions form a luminal bridge that stabilizes the initial structure during complex assembly. The gTuRC (via TUBGCP2) interacts with MZT2A/MZT2B and CDK5RAP2 (via CM1 motif); the interactions play a role in gTuRC activation.

The protein resides in the cytoplasm. Its subcellular location is the cytoskeleton. It localises to the microtubule organizing center. The protein localises to the centrosome. Component of the gamma-tubulin ring complex (gTuRC) which mediates microtubule nucleation. The gTuRC regulates the minus-end nucleation of alpha-beta tubulin heterodimers that grow into microtubule protafilaments, a critical step in centrosome duplication and spindle formation. This is Gamma-tubulin complex component 6 (TUBGCP6) from Homo sapiens (Human).